The primary structure comprises 149 residues: uncharacterized protein (149 aa).

The tract at residues 1 to 103 (MFGLKVKNAE…SPTQGSRLRH (103 aa)) is disordered. A compositionally biased stretch (basic and acidic residues) spans 7-18 (KNAEADTAKSNE). Low complexity predominate over residues 26–41 (TGSSTTSGSGQSTQRG). Residues 61-72 (GSQGNSGDQGTE) show a composition bias toward polar residues.

Belongs to the adhesin P1 family.

This is an uncharacterized protein from Mycoplasma pneumoniae (strain ATCC 29342 / M129 / Subtype 1) (Mycoplasmoides pneumoniae).